The following is a 638-amino-acid chain: Threonine--tRNA ligase (638 aa).

A TGS domain is found at 1-63 (MVMIQIELPD…TESGRLEIIT (63 aa)). Positions 245-536 (DHRRIGRELD…LIEHYAGNFP (292 aa)) are catalytic. Positions 337, 388, and 513 each coordinate Zn(2+).

This sequence belongs to the class-II aminoacyl-tRNA synthetase family. As to quaternary structure, homodimer. Requires Zn(2+) as cofactor.

Its subcellular location is the cytoplasm. It catalyses the reaction tRNA(Thr) + L-threonine + ATP = L-threonyl-tRNA(Thr) + AMP + diphosphate + H(+). Its function is as follows. Catalyzes the attachment of threonine to tRNA(Thr) in a two-step reaction: L-threonine is first activated by ATP to form Thr-AMP and then transferred to the acceptor end of tRNA(Thr). Also edits incorrectly charged L-seryl-tRNA(Thr). This is Threonine--tRNA ligase from Syntrophotalea carbinolica (strain DSM 2380 / NBRC 103641 / GraBd1) (Pelobacter carbinolicus).